The following is a 360-amino-acid chain: Fructose import permease protein FrcC (360 aa).

9 helical membrane passes run 48 to 68, 84 to 106, 125 to 145, 155 to 175, 205 to 225, 254 to 274, 284 to 304, 310 to 330, and 335 to 355; these read AAVP…ILGG, AIVG…DLSV, GFPP…CGYI, LPPF…NFLY, AVFT…WYVL, MLIS…WALI, AGQF…ISLF, IMGM…LRLM, and QWTY…DQWI.

Belongs to the binding-protein-dependent transport system permease family. In terms of assembly, the complex is composed of two ATP-binding proteins (FrcA), two transmembrane proteins (FrcC) and a solute-binding protein (FrcB).

It localises to the cell inner membrane. Its function is as follows. Part of the high-affinity ABC transporter complex FrcBCA involved in fructose uptake. Is also a high-affinity transporter for ribose and mannose. Responsible for the translocation of the substrate across the membrane. This Rhizobium meliloti (Ensifer meliloti) protein is Fructose import permease protein FrcC.